Consider the following 277-residue polypeptide: Putative pyruvate, phosphate dikinase regulatory protein (277 aa).

151-158 (GISRTSKT) is an ADP binding site.

Belongs to the pyruvate, phosphate/water dikinase regulatory protein family. PDRP subfamily.

It catalyses the reaction N(tele)-phospho-L-histidyl/L-threonyl-[pyruvate, phosphate dikinase] + ADP = N(tele)-phospho-L-histidyl/O-phospho-L-threonyl-[pyruvate, phosphate dikinase] + AMP + H(+). The catalysed reaction is N(tele)-phospho-L-histidyl/O-phospho-L-threonyl-[pyruvate, phosphate dikinase] + phosphate + H(+) = N(tele)-phospho-L-histidyl/L-threonyl-[pyruvate, phosphate dikinase] + diphosphate. Its function is as follows. Bifunctional serine/threonine kinase and phosphorylase involved in the regulation of the pyruvate, phosphate dikinase (PPDK) by catalyzing its phosphorylation/dephosphorylation. This Alkaliphilus oremlandii (strain OhILAs) (Clostridium oremlandii (strain OhILAs)) protein is Putative pyruvate, phosphate dikinase regulatory protein.